Here is a 158-residue protein sequence, read N- to C-terminus: MEPPEGAGTGEIVKEAEVPQAALGVPAQGTGDNGHTPVEEEVGGIPVPAPGLLQVTERRQPLSSVSSLEVHFDLLDLTELTDMSDQELAEVFADSDDENLNTESPAGLHPLPRAGYLRSPSWTRTRAEQSHEKQPLGDPERQATVLDTFLTVERPQED.

Disordered regions lie at residues 1 to 50 (MEPP…VPAP) and 93 to 158 (ADSD…PQED). A phosphoserine mark is found at Ser-95 and Ser-119. Residues 125–141 (TRAEQSHEKQPLGDPER) are compositionally biased toward basic and acidic residues.

Belongs to the dysbindin family.

The polypeptide is Dysbindin domain-containing protein 1 (DBNDD1) (Homo sapiens (Human)).